The primary structure comprises 197 residues: Segregation and condensation protein B (197 aa).

It belongs to the ScpB family. As to quaternary structure, homodimer. Homodimerization may be required to stabilize the binding of ScpA to the Smc head domains. Component of a cohesin-like complex composed of ScpA, ScpB and the Smc homodimer, in which ScpA and ScpB bind to the head domain of Smc. The presence of the three proteins is required for the association of the complex with DNA.

Its subcellular location is the cytoplasm. Its function is as follows. Participates in chromosomal partition during cell division. May act via the formation of a condensin-like complex containing Smc and ScpA that pull DNA away from mid-cell into both cell halves. The protein is Segregation and condensation protein B of Syntrophotalea carbinolica (strain DSM 2380 / NBRC 103641 / GraBd1) (Pelobacter carbinolicus).